Consider the following 242-residue polypeptide: uncharacterized protein (242 aa).

Residues 17–85 (QRVDERIATT…HGSGSVVRDP (69 aa)) form the HTH gntR-type domain. A DNA-binding region (H-T-H motif) is located at residues 45-64 (ERDLAERLGVNRTSLRQGLA).

This is an uncharacterized protein from Mycobacterium tuberculosis (strain ATCC 25618 / H37Rv).